We begin with the raw amino-acid sequence, 264 residues long: Myozenin-2 (264 aa).

Arg53 bears the Omega-N-methylarginine mark. The segment at 90-135 is disordered; sequence GKVDGSNLEGGSQQAPLTPPNTPDPRSPPNPDNIAPGYSGPLKEIP. Residue Ser101 is modified to Phosphoserine. Over residues 106–120 the composition is skewed to pro residues; the sequence is LTPPNTPDPRSPPNP. A phosphothreonine mark is found at Thr107 and Thr111. Ser116 carries the phosphoserine modification.

Belongs to the myozenin family. In terms of assembly, interacts via its C-terminus with spectrin repeats 3 and 4 of ACTN2. Interacts with ACTN1, LDB3, MYOT and PPP3CA.

It is found in the cytoplasm. It localises to the myofibril. The protein resides in the sarcomere. The protein localises to the z line. In terms of biological role, myozenins may serve as intracellular binding proteins involved in linking Z line proteins such as alpha-actinin, gamma-filamin, TCAP/telethonin, LDB3/ZASP and localizing calcineurin signaling to the sarcomere. Plays an important role in the modulation of calcineurin signaling. May play a role in myofibrillogenesis. The chain is Myozenin-2 (MYOZ2) from Pongo abelii (Sumatran orangutan).